Here is a 145-residue protein sequence, read N- to C-terminus: Large ribosomal subunit protein uL14m (145 aa).

Residues 1 to 30 (MAFSSGLWGPCVHMSRAFSQRCFSTTGSLG) constitute a mitochondrion transit peptide.

This sequence belongs to the universal ribosomal protein uL14 family. In terms of assembly, component of the mitochondrial ribosome large subunit (39S) which comprises a 16S rRNA and about 50 distinct proteins. Interacts with MALSU1.

It localises to the mitochondrion. In terms of biological role, may form part of 2 intersubunit bridges in the assembled ribosome. Upon binding to MALSU1, intersubunit bridge formation is blocked, preventing ribosome formation and repressing translation. This chain is Large ribosomal subunit protein uL14m (MRPL14), found in Bos taurus (Bovine).